We begin with the raw amino-acid sequence, 113 residues long: uncharacterized protein (113 aa).

An N-terminal signal peptide occupies residues 1–16 (MKCLVVLTALFGISTA). Over residues 81–101 (GGNGGNGGGGNGGNNGNGNGN) the composition is skewed to gly residues. The disordered stretch occupies residues 81–103 (GGNGGNGGGGNGGNNGNGNGNNG).

As to expression, nacreous layer of shell (at protein level).

The protein localises to the secreted. This is an uncharacterized protein from Margaritifera margaritifera (Freshwater pearl mussel).